We begin with the raw amino-acid sequence, 661 residues long: Immunoglobulin-like domain-containing receptor 2 (661 aa).

A signal peptide spans 1–35 (MPAFPTLDLDGKLGKMDRVVLGWTAVFWLTAMVEG). Positions 36-177 (LQVTVPDKKK…LEGKNEDSVE (142 aa)) constitute an Ig-like V-type domain. Residues 36-201 (LQVTVPDKKK…PSFAVEIMPE (166 aa)) are Lumenal-facing. Cysteines 57 and 160 form a disulfide. Residues 202–222 (WVFVGLVILGIFLFFVLVGIC) traverse the membrane as a helical segment. Over 223–661 (WCQCCPHSCC…DFPTRMSLVV (439 aa)) the chain is Cytoplasmic. Disordered regions lie at residues 288–310 (LMDKPHPPPLAPSDSTGGSHSVR), 410–429 (EDRESFRHSQQRSKSEMLSR), and 453–661 (QRSR…SLVV). Basic and acidic residues-rich tracts occupy residues 410-428 (EDRESFRHSQQRSKSEMLS) and 463-478 (HEARAGSRFERSESRA). At Ser487 the chain carries Phosphoserine. Residues 491-506 (YYGRGRSREPPGDGER) show a composition bias toward basic and acidic residues. Omega-N-methylarginine is present on Arg559. At Ser594 the chain carries Phosphoserine. Residues 595 to 607 (EGEDEDDAADEDA) are compositionally biased toward acidic residues. Basic and acidic residues predominate over residues 628–639 (RGRDLSFHSNSE).

Belongs to the immunoglobulin superfamily. LISCH7 family. In terms of assembly, interacts with MARVELD2 and OCLN. Interacts with P4HB and HSPA5; the interaction with HSPA5 stabilizes ILDR2 expression. Interacts (via C-terminus) with TRA2A, TRA2B and SRSF1. In terms of tissue distribution, expressed in epithelial tissues, mainly in liver, kidney and colon.

The protein resides in the endoplasmic reticulum membrane. It is found in the cell junction. It localises to the tight junction. Its subcellular location is the nucleus. Functionally, may be involved in ER stress pathways with effects on lipid homeostasis and insulin secretion. With ILDR1 and LSR, involved in the maintain of the epithelial barrier function through the recruitment of MARVELD2/tricellulin to tricellular tight junctions. Also functions as a B7-like protein family member expressed on immune cells and inflamed tissue and with T-cell inhibitory activity. In the inner ear, may regulate alternative pre-mRNA splicing via binding to TRA2A, TRA2B and SRSF1. This is Immunoglobulin-like domain-containing receptor 2 from Mus musculus (Mouse).